We begin with the raw amino-acid sequence, 432 residues long: Isocitrate lyase (432 aa).

Residues 1-24 form a disordered region; the sequence is MSNVGKPRTAQEIQQDWDTNPRWN. The span at 11–22 shows a compositional bias: polar residues; it reads QEIQQDWDTNPR. 93–95 lines the substrate pocket; the sequence is SGW. Asp155 is a Mg(2+) binding site. Cys193 acts as the Proton acceptor in catalysis. Substrate-binding positions include 194 to 195, Arg230, 315 to 319, and Thr349; these read GH and NCSPS.

This sequence belongs to the isocitrate lyase/PEP mutase superfamily. Isocitrate lyase family. Homotetramer. Mg(2+) is required as a cofactor.

The enzyme catalyses D-threo-isocitrate = glyoxylate + succinate. It participates in carbohydrate metabolism; glyoxylate cycle; (S)-malate from isocitrate: step 1/2. Inhibited by 3-phosphoglycerate, 6-phosphogluconate, phosphoenolpyruvate (PEP), fructose 1,6-bisphosphate, glycolate, oxalate, and itaconate. Its function is as follows. Involved in the metabolic adaptation in response to environmental changes. Catalyzes the reversible formation of succinate and glyoxylate from isocitrate, a key step of the glyoxylate cycle, which operates as an anaplerotic route for replenishing the tricarboxylic acid cycle during growth on fatty acid substrates. This Corynebacterium glutamicum (strain ATCC 13032 / DSM 20300 / JCM 1318 / BCRC 11384 / CCUG 27702 / LMG 3730 / NBRC 12168 / NCIMB 10025 / NRRL B-2784 / 534) protein is Isocitrate lyase.